A 130-amino-acid polypeptide reads, in one-letter code: Protein ApaG (130 aa).

The ApaG domain maps to 3–127 (RALTRDIEVT…FSLDSPGLVR (125 aa)).

In Rhizobium meliloti (strain 1021) (Ensifer meliloti), this protein is Protein ApaG.